A 655-amino-acid polypeptide reads, in one-letter code: MLSKIIIIIFIVINFINIIISSITFDIDCRDIINGGINPSSSSSNSNSGSDYSGEIILNLKNKECKDYHIEELLNNYYIQNNNNNNNNIITINGNETFGTTIIQSKKQPFLNLINDNSNNSTTTKSISLNITINNINFNNWITPILYMETINNNIDFINTNFNNHSNEILISYPIISNNDSNDNNSINKTLNSINLNNCKFENFNYLTKLNNLIMPIKLKQTSISVKTSTFINLSMNNTFFHLNQSSLTISNCSTNNITTNNFSFITLINSPTIISNYNHSNSNGSFINHINNNNDLIDFSNENMLIEFSNFNNNLILPQPQPQLELLEQRLQQLNNSDYNNNNNNNNNNNNNNNNNNNNNNNSFNENINGFIILDCENKTEKANVLFYSNQFINIMPYNINFNYSIINIKNINLILNNNNIINNINSNSNNNNSGIISKANFNNQNLIHIVNSNLTLIDSKIESDNPIGGEYSTVYIDSPSNDKIGWNKSNNTNSSDDDDSNSNSSSSGGGSGDNNSIGSSDNSKNKNNKLEWCFDCDGCVFSISTDKNVTLTNSDICPDPDAPNNSNDNGNGNGGGSGKKSYKNTILAVTISAIGIICVALLLTVVILKRRNRKSSFDYLLINQYYLDDEEEKRELLLNRNNNYYYDNNIIDN.

The helical transmembrane segment at Ile-5–Phe-25 threads the bilayer. Disordered regions lie at residues Asn-337 to Asn-363 and Asp-484 to Ser-525. The segment covering Asp-515–Asn-524 has biased composition (low complexity). A helical membrane pass occupies residues Ile-588–Val-608.

The protein resides in the membrane. This is an uncharacterized protein from Dictyostelium discoideum (Social amoeba).